The sequence spans 1507 residues: Transient receptor potential cation channel subfamily M member 2 (1507 aa).

A compositionally biased stretch (basic and acidic residues) spans 1 to 11 (MEPLDQRRTDS). A disordered region spans residues 1–24 (MEPLDQRRTDSDQEEGFGVQSRRA). Topologically, residues 1–751 (MEPLDQRRTD…WWGQLCVDNG (751 aa)) are cytoplasmic. 5 residues coordinate ADP-D-ribose: T173, N178, R301, G332, and T335. T739 carries the phosphothreonine modification. The stretch at 752-768 (LWRIILCMLAFPLLFTG) is an intramembrane region. The Cytoplasmic segment spans residues 769 to 793 (FISFREKRLQALCRLARVRAFFNAP). Residues 794 to 814 (VVIFYLNILSYFAFLCLFAYV) form a helical membrane-spanning segment. Residues 815–825 (LMVDFQPSPSW) are Extracellular-facing. Residues 826–846 (CEYLIYLWLFSLVCEETRQLF) form a helical membrane-spanning segment. Residues E841 and Q844 each coordinate Ca(2+). At 847 to 865 (YDPDGCGLMKMASLYFSDF) the chain is on the cytoplasmic side. The helical transmembrane segment at 866 to 886 (WNKLDVGAILLFIAGLTCRLI) threads the bilayer. A Ca(2+)-binding site is contributed by N867. The Extracellular segment spans residues 887 to 894 (PATLYPGR). Residues 895-915 (IILSLDFIMFCLRLMHIFTIS) form a helical membrane-spanning segment. Residues 916 to 927 (KTLGPKIIIVKR) are Cytoplasmic-facing. The helical transmembrane segment at 928-948 (MMKDVFFFLFLLAVWVVSFGV) threads the bilayer. At 949-968 (AKQAILIHNESRVDWIFRGV) the chain is on the extracellular side. Residues 969-983 (IYHSYLTIFGQIPTY) constitute an intramembrane region (pore-forming). Positions 977-980 (FGQI) match the Selectivity filter motif. Topologically, residues 984 to 1020 (IDGVNFSMDQCSPNGTDPYKPKCPESDWTGQAPAFPE) are extracellular. C994 and C1006 are disulfide-bonded. Residues 1021–1042 (WLTVTLLCLYLLFANILLLNLL) form a helical membrane-spanning segment. Over 1043 to 1077 (IAMFNYTFQEVQEHTDQIWKFQRHDLIEEYHGRPP) the chain is Cytoplasmic. E1071 contacts Ca(2+). An intramembrane segment occupies 1078–1096 (APPPLILLSHLQLLIKRIV). The Cytoplasmic portion of the chain corresponds to 1097–1507 (LKIPAKRHKQ…KVASLFGAHF (411 aa)). One can recognise a Nudix hydrolase domain in the interval 1351–1502 (RWKRNQGGGI…KKILQKVASL (152 aa)). S1379 provides a ligand contact to ADP-D-ribose. The Nudix box signature appears at 1387-1408 (GSREPGKMLPRKLKQVLQQEYW). D1428, R1430, Y1489, and N1491 together coordinate ADP-D-ribose.

It belongs to the transient receptor (TC 1.A.4) family. LTrpC subfamily. TRPM2 sub-subfamily. In terms of assembly, homotetramer. In terms of processing, phosphorylation of TRPM2 at Thr-739 by protein kinase C (PKC) counteracts the effect of cytosolic Ca(2+) and elevates the temperature threshold. As to expression, detected in pancreas beta-cells. Detected in fetal brain cortex neurons (at protein level).

Its subcellular location is the cell membrane. It localises to the perikaryon. The protein localises to the cell projection. It is found in the cytoplasmic vesicle. The protein resides in the lysosome. It catalyses the reaction Ca(2+)(in) = Ca(2+)(out). The catalysed reaction is Na(+)(in) = Na(+)(out). Its activity is regulated as follows. Activated by intracellular ADP-ribose, beta-NAD (NAD(+)) and similar compounds, and by oxidative stress caused by reactive oxygen or nitrogen species. Ca(2+) and PI(4,5)P2 are required for channel opening by ADP-ribose. Activation by ADP-ribose and beta-NAD is strongly increased by moderate heat (35 to 40 degrees Celsius). Likewise, reactive oxygen species lower the threshold for activation by moderate heat (37 degrees Celsius). Activated by moderate heat (35 to 40 degrees Celsius). Inactivated by exposure to extracellular pH between 4.0 and 6.5; irreversibly inactivated when open channels are exposed to extracellular pH between 4.0 and 6.5, while pre-exposure of closed channels to extracellular pH 5.5 gives rise to currents that rapidly inactivate, but protects against irreversible inactivation. Inactivated by intracellular ATP. Activated by arachidonic acid. Inhibited by 2-aminoethyl diphenylborinate (2-APB). Nonselective, voltage-independent cation channel that mediates Na(+) and Ca(2+) influx, leading to increased cytoplasmic Ca(2+) levels. Functions as a ligand-gated ion channel gated by intracellular adenosine diphosphate ribose (ADP-ribose), Ca(2+), warm temperature, and oxidative stress. The precise physiological activators are under debate; the true, physiological activators may be ADP-ribose and ADP-ribose-2'-phosphate. Binding of ADP-ribose to the cytoplasmic Nudix domain causes a conformation change; the channel is primed but still requires Ca(2+) binding to trigger channel opening. Extracellular Ca(2+) passes through the channel and increases channel activity. Also contributes to Ca(2+) release from intracellular stores in response to ADP-ribose. Plays a role in numerous processes that involve signaling via intracellular Ca(2+) levels. Besides, mediates the release of lysosomal Zn(2+) stores in response to reactive oxygen species, leading to increased cytosolic Zn(2+) levels. Plays a role in insulin secretion, a process that requires increased cytoplasmic Ca(2+) levels. Required for normal IFNG and cytokine secretion and normal innate immune immunity in response to bacterial infection. Required for normal phagocytosis and cytokine release by macrophages exposed to zymosan (in vitro). Plays a role in dendritic cell differentiation and maturation, and in dendritic cell chemotaxis via its role in regulating cytoplasmic Ca(2+) levels. Plays a role in the regulation of the reorganization of the actin cytoskeleton and filopodia formation in response to reactive oxygen species via its function in increasing cytoplasmic Ca(2+) and Zn(2+) levels. Confers susceptibility to cell death following oxidative stress. This chain is Transient receptor potential cation channel subfamily M member 2, found in Rattus norvegicus (Rat).